Here is a 483-residue protein sequence, read N- to C-terminus: Glutamyl-tRNA(Gln) amidotransferase subunit A (483 aa).

Residues lysine 76 and serine 151 each act as charge relay system in the active site. Serine 175 acts as the Acyl-ester intermediate in catalysis.

It belongs to the amidase family. GatA subfamily. In terms of assembly, heterotrimer of A, B and C subunits.

It catalyses the reaction L-glutamyl-tRNA(Gln) + L-glutamine + ATP + H2O = L-glutaminyl-tRNA(Gln) + L-glutamate + ADP + phosphate + H(+). In terms of biological role, allows the formation of correctly charged Gln-tRNA(Gln) through the transamidation of misacylated Glu-tRNA(Gln) in organisms which lack glutaminyl-tRNA synthetase. The reaction takes place in the presence of glutamine and ATP through an activated gamma-phospho-Glu-tRNA(Gln). This chain is Glutamyl-tRNA(Gln) amidotransferase subunit A, found in Pseudomonas fluorescens (strain Pf0-1).